We begin with the raw amino-acid sequence, 472 residues long: Methanethiol oxidase (472 aa).

An N-acetylalanine modification is found at Ala2. Residues Ser111 and Ser467 each carry the phosphoserine modification.

Belongs to the selenium-binding protein family. In terms of assembly, interacts with USP33. In terms of processing, the N-terminus is blocked. In terms of tissue distribution, present in liver and colon (at protein level).

Its subcellular location is the nucleus. It is found in the cytoplasm. The protein resides in the cytosol. It localises to the membrane. The enzyme catalyses methanethiol + O2 + H2O = hydrogen sulfide + formaldehyde + H2O2 + H(+). The protein operates within organosulfur degradation. In terms of biological role, catalyzes the oxidation of methanethiol, an organosulfur compound known to be produced in substantial amounts by gut bacteria. Selenium-binding protein which may be involved in the sensing of reactive xenobiotics in the cytoplasm. May be involved in intra-Golgi protein transport. In Rattus norvegicus (Rat), this protein is Methanethiol oxidase (Selenbp1).